The chain runs to 378 residues: MNIWLSMLTTTGLGAIIGGFTNHLAIKMLFRPHRPMYIGKFQVPFTPGLIPKRRDELAVQLGKMVVEHLLTPEGIGKKLTNEEFQKGLIHWAQVEVGKVMTNEQSLRHMLEKWDVAHVEKEATEKIEQVIIEKIEAFLEEYYTYTWEQALPHSVHEKIENAIPNVSAFILKRATHFFESEEGKSRLSKMIDDFFASRGALLNLVGMFLGNVSVVDRVQPEVIKFLGQDGTKQLLTDVLQKEWEKLKGRDVKELETFVEKEMIVSSILSAVQVEETVSKFLNQSVQQVCEPVRETIIEKVVPGVVTKGLKWGTENVESILNNLHLAEIVQQEVSTFSTERLEDLVLSITKNELKMITYLGALLGGMIGIVQGLLLLFLK.

2 consecutive transmembrane segments (helical) span residues 1–21 (MNIW…GGFT) and 357–377 (YLGA…LLFL).

The protein belongs to the UPF0754 family.

Its subcellular location is the cell membrane. This chain is UPF0754 membrane protein BCA_0919, found in Bacillus cereus (strain 03BB102).